Here is a 240-residue protein sequence, read N- to C-terminus: Inhibitor of growth protein 5 (240 aa).

Residues 115 to 165 (MDGSDFESTGARSLKKGRSQKEKRSSRGRGRRTSEEDTPKKKKHKSGSEFT) form a disordered region. Ser-118 bears the Phosphoserine mark. Arg-126 is subject to Omega-N-methylarginine. Residues 186–235 (PTYCLCHQVSYGEMIGCDNPDCPIEWFHFACVDLTTKPKGKWFCPRCVQE) form a PHD-type zinc finger. Zn(2+) contacts are provided by Cys-189, Cys-191, Cys-202, Cys-207, His-213, Cys-216, Cys-229, and Cys-232.

The protein belongs to the ING family. In terms of assembly, component of the HBO1 complex composed of KAT7/HBO1, MEAF6, ING5, and one scaffold subunit: complexes containing BRPF scaffold (BRPF1, BRD1/BRPF2 or BRPF3) direct KAT7/HBO1 specificity towards H3K14ac, while complexes containing JADE scaffold (JADE1, JADE2 and JADE3) mediate acetylation of histone H4. Component of the MOZ/MORF complex composed at least of ING5, KAT6A, KAT6B, MEAF6 and one of BRPF1, BRD1/BRPF2 and BRPF3. Interacts with H3K4me3 and to a lesser extent with H3K4me2. Interacts with EP300 and p53/TP53. Interacts with INCA1.

It is found in the nucleus. It localises to the chromosome. Component of the HBO1 complex, which specifically mediates acetylation of histone H3 at 'Lys-14' (H3K14ac) and, to a lower extent, acetylation of histone H4. Component of the MOZ/MORF complex which has a histone H3 acetyltransferase activity. Through chromatin acetylation it may regulate DNA replication and may function as a transcriptional coactivator. Inhibits cell growth, induces a delay in S-phase progression and enhances Fas-induced apoptosis in an INCA1-dependent manner. The polypeptide is Inhibitor of growth protein 5 (Ing5) (Mus musculus (Mouse)).